Here is a 109-residue protein sequence, read N- to C-terminus: Nucleoid-associated protein SG0690 (109 aa).

Residues Met1–Arg23 form a disordered region.

This sequence belongs to the YbaB/EbfC family. As to quaternary structure, homodimer.

Its subcellular location is the cytoplasm. The protein resides in the nucleoid. In terms of biological role, binds to DNA and alters its conformation. May be involved in regulation of gene expression, nucleoid organization and DNA protection. The sequence is that of Nucleoid-associated protein SG0690 from Sodalis glossinidius (strain morsitans).